Here is a 62-residue protein sequence, read N- to C-terminus: Large ribosomal subunit protein uL30 (62 aa).

This sequence belongs to the universal ribosomal protein uL30 family. Part of the 50S ribosomal subunit.

The sequence is that of Large ribosomal subunit protein uL30 from Paracoccus denitrificans (strain Pd 1222).